The primary structure comprises 81 residues: ATP synthase subunit c (81 aa).

2 helical membrane-spanning segments follow: residues 7 to 27 and 57 to 77; these read AASV…PGLG and LAFM…LLFA.

This sequence belongs to the ATPase C chain family. As to quaternary structure, F-type ATPases have 2 components, F(1) - the catalytic core - and F(0) - the membrane proton channel. F(1) has five subunits: alpha(3), beta(3), gamma(1), delta(1), epsilon(1). F(0) has four main subunits: a(1), b(1), b'(1) and c(10-14). The alpha and beta chains form an alternating ring which encloses part of the gamma chain. F(1) is attached to F(0) by a central stalk formed by the gamma and epsilon chains, while a peripheral stalk is formed by the delta, b and b' chains.

It localises to the cellular thylakoid membrane. F(1)F(0) ATP synthase produces ATP from ADP in the presence of a proton or sodium gradient. F-type ATPases consist of two structural domains, F(1) containing the extramembraneous catalytic core and F(0) containing the membrane proton channel, linked together by a central stalk and a peripheral stalk. During catalysis, ATP synthesis in the catalytic domain of F(1) is coupled via a rotary mechanism of the central stalk subunits to proton translocation. Its function is as follows. Key component of the F(0) channel; it plays a direct role in translocation across the membrane. A homomeric c-ring of between 10-14 subunits forms the central stalk rotor element with the F(1) delta and epsilon subunits. In Synechococcus sp. (strain JA-3-3Ab) (Cyanobacteria bacterium Yellowstone A-Prime), this protein is ATP synthase subunit c.